Here is a 547-residue protein sequence, read N- to C-terminus: Cytochrome P450 monooxygenase 81 (547 aa).

2 consecutive transmembrane segments (helical) span residues 6 to 23 (IPTQ…LFLL) and 106 to 124 (AFFA…ATAG). C483 lines the heme pocket. N-linked (GlcNAc...) asparagine glycosylation is found at N503 and N516.

It belongs to the cytochrome P450 family. It depends on heme as a cofactor.

Its subcellular location is the membrane. Its pathway is secondary metabolite biosynthesis. Functionally, cytochrome P450 monooxygenase that is able to use dehydroabietic acid as a substrate for oxidation. The chain is Cytochrome P450 monooxygenase 81 from Postia placenta (strain ATCC 44394 / Madison 698-R) (Brown rot fungus).